The primary structure comprises 418 residues: Nucleoside permease NupG (418 aa).

At 1–4 (MNLK) the chain is on the cytoplasmic side. A helical membrane pass occupies residues 5–29 (LQLKILSFLQFCLWGSWLTTLGSYM). Residues 30–36 (FVTLKFD) are Periplasmic-facing. Residues 37 to 58 (GASIGAVYSSLGIAAVFMPALL) traverse the membrane as a helical segment. Topologically, residues 59–67 (GIVADKWLS) are cytoplasmic. Residues 68-88 (AKWVYAICHTIGAITLFMAAQ) form a helical membrane-spanning segment. Topologically, residues 89 to 91 (VTT) are periplasmic. Residues 92–113 (PEAMFLVILINSFAYMPTLGLI) traverse the membrane as a helical segment. Over 114–135 (NTISYYRLQNAGMDIVTDFPPI) the chain is Cytoplasmic. Residues 136–156 (RIWGTIGFIMAMWVVSLSGFE) form a helical membrane-spanning segment. Residues 157–158 (LS) lie on the Periplasmic side of the membrane. The helical transmembrane segment at 159 to 178 (HMQLYIGAALSAILVLFTLT) threads the bilayer. Residues 179–209 (LPHIPVAKQQANQSWTTLLGLDAFALFKNKR) are Cytoplasmic-facing. Residues 210–236 (MAIFFIFSMLLGAELQITNMFGNTFLH) form a helical membrane-spanning segment. Residues 237–247 (SFDKDPMFASS) are Periplasmic-facing. The chain crosses the membrane as a helical span at residues 248–268 (FIVQHASIIMSISQISETLFI). The Cytoplasmic segment spans residues 269–280 (LTIPFFLSRYGI). A helical transmembrane segment spans residues 281 to 300 (KNVMMISIVAWILRFALFAY). The Periplasmic portion of the chain corresponds to 301–305 (GDPTP). The chain crosses the membrane as a helical span at residues 306-326 (FGTVLLVLSMIVYGCAFDFFN). Topologically, residues 327–346 (ISGSVFVEKEVSPAIRASAQ) are cytoplasmic. The helical transmembrane segment at 347 to 369 (GMFLMMTNGFGCILGGIVSGKVV) threads the bilayer. Over 370–379 (EMYTQNGITD) the chain is Periplasmic. The chain crosses the membrane as a helical span at residues 380-403 (WQTVWLIFAGYSVVLAFAFMAMFK). Residues 404–418 (YKHVRVPTGTQTVSH) lie on the Cytoplasmic side of the membrane.

Belongs to the major facilitator superfamily. Nucleoside:H(+) symporter (NHS) (TC 2.A.1.10) family.

Its subcellular location is the cell inner membrane. The enzyme catalyses adenosine(in) + H(+)(in) = adenosine(out) + H(+)(out). The catalysed reaction is uridine(in) + H(+)(in) = uridine(out) + H(+)(out). It carries out the reaction thymidine(in) + H(+)(in) = thymidine(out) + H(+)(out). It catalyses the reaction cytidine(in) + H(+)(in) = cytidine(out) + H(+)(out). The enzyme catalyses 2'-deoxycytidine(in) + H(+)(in) = 2'-deoxycytidine(out) + H(+)(out). The catalysed reaction is guanosine(in) + H(+)(in) = guanosine(out) + H(+)(out). It carries out the reaction inosine(in) + H(+)(in) = inosine(out) + H(+)(out). With respect to regulation, inhibited by the protonophore uncouplers 2,4-dinitrophenol and carbonyl cyanide m-chlorophenylhydrazone (CCCP), and by valinomycin. Inhibited by the nucleoside antibiotic showdomycin. In terms of biological role, broad-specificity transporter of purine and pyrimidine nucleosides. Can transport adenosine, uridine, thymidine, cytidine, deoxycytidine, guanosine and inosine. Can also transport xanthosine, but with a very low affinity. Transport is driven by a proton motive force. The sequence is that of Nucleoside permease NupG from Escherichia coli (strain K12).